Here is a 395-residue protein sequence, read N- to C-terminus: Putative pyridoxal phosphate-dependent acyltransferase (395 aa).

110 to 111 (GF) contacts pyridoxal 5'-phosphate. Substrate is bound at residue His135. Pyridoxal 5'-phosphate is bound by residues Ser185, 210 to 213 (DDAH), and 240 to 243 (TLSK). The residue at position 243 (Lys243) is an N6-(pyridoxal phosphate)lysine. Thr357 is a substrate binding site.

It belongs to the class-II pyridoxal-phosphate-dependent aminotransferase family. As to quaternary structure, homodimer. The cofactor is pyridoxal 5'-phosphate.

This is Putative pyridoxal phosphate-dependent acyltransferase from Staphylococcus aureus (strain MRSA252).